We begin with the raw amino-acid sequence, 780 residues long: uncharacterized protein (780 aa).

In terms of domain architecture, BTB spans Asn-10–Tyr-80.

This is an uncharacterized protein from Dictyostelium discoideum (Social amoeba).